Reading from the N-terminus, the 143-residue chain is Large ribosomal subunit protein uL15 (143 aa).

The disordered stretch occupies residues 1-57 (MQLNNLKPAAGSKHAKRRVGRGIGSGLGKTAGRGHKGQKSRSGGFHKVGFEGGQMPL). The segment covering 21-31 (RGIGSGLGKTA) has biased composition (gly residues).

The protein belongs to the universal ribosomal protein uL15 family. As to quaternary structure, part of the 50S ribosomal subunit.

Functionally, binds to the 23S rRNA. The sequence is that of Large ribosomal subunit protein uL15 from Ralstonia pickettii (strain 12J).